The chain runs to 483 residues: Uridine/cytidine kinase UKL1, chloroplastic (483 aa).

The transit peptide at M1–N47 directs the protein to the chloroplast. The tract at residues P59–G264 is uridine kinase. Residues N274–E483 form a uracil phosphoribosyltransferase region. Residues K298, R307, and C341 to L344 each bind GTP. Positions 351 and 376 each coordinate 5-phospho-alpha-D-ribose 1-diphosphate. Position 396 (R396) interacts with GTP. 5-phospho-alpha-D-ribose 1-diphosphate is bound by residues D402, T407–S410, and E473. G472–F474 lines the uracil pocket.

The protein in the N-terminal section; belongs to the uridine kinase family. This sequence in the C-terminal section; belongs to the UPRTase family.

It is found in the plastid. The protein localises to the chloroplast. It catalyses the reaction cytidine + ATP = CMP + ADP + H(+). The catalysed reaction is uridine + ATP = UMP + ADP + H(+). The protein operates within pyrimidine metabolism; CTP biosynthesis via salvage pathway; CTP from cytidine: step 1/3. Its pathway is pyrimidine metabolism; UMP biosynthesis via salvage pathway; UMP from uridine: step 1/1. In terms of biological role, involved in the pyrimidine salvage pathway. Phosphorylates uridine to uridine monophosphate (UMP). Phosphorylates cytidine to cytidine monophosphate (CMP). Does not possess uracil phosphoribosyltransferase (UPRTase) activity that catalyzes the conversion of uracil and 5-phospho-alpha-D-ribose 1-diphosphate (PRPP) to UMP and diphosphate. This Arabidopsis thaliana (Mouse-ear cress) protein is Uridine/cytidine kinase UKL1, chloroplastic.